Consider the following 453-residue polypeptide: Anthocyanidin 3-O-glucosyltransferase (453 aa).

The Proton acceptor role is filled by His-17. His-17 provides a ligand contact to an anthocyanidin. Asp-117 acts as the Charge relay in catalysis. A UDP-alpha-D-glucose-binding site is contributed by Thr-139. His-148 is a binding site for an anthocyanidin. The UDP-alpha-D-glucose site is built by Ala-331, Gln-333, His-348, Trp-351, Asn-352, Ser-353, and Glu-356. Gly-371 is a binding site for an anthocyanidin. Residues Asp-372 and Gln-373 each contribute to the UDP-alpha-D-glucose site.

It belongs to the UDP-glycosyltransferase family.

The catalysed reaction is an anthocyanidin + UDP-alpha-D-glucose + H(+) = an anthocyanidin 3-O-beta-D-glucoside + UDP. The enzyme catalyses delphinidin + UDP-alpha-D-glucose = delphinidin 3-O-beta-D-glucoside + UDP. It catalyses the reaction pelargonidin + UDP-alpha-D-glucose = pelargonidin 3-O-beta-D-glucoside + UDP. It carries out the reaction cyanidin + UDP-alpha-D-glucose = cyanidin 3-O-beta-D-glucoside + UDP + H(+). The protein operates within pigment biosynthesis; anthocyanin biosynthesis. Functionally, in the presence of other necessary color factors, this glycosylation reaction allows the accumulation of anthocyanin pigments. Anthocyanidins are the preferred substrates, while flavonols are only a minor substrate in vitro. This Gentiana triflora (Clustered gentian) protein is Anthocyanidin 3-O-glucosyltransferase.